Here is a 201-residue protein sequence, read N- to C-terminus: Glycerol-3-phosphate acyltransferase (201 aa).

The next 6 helical transmembrane spans lie at 10-30 (MLIGALIFGYVLGSIPFGLIL), 60-80 (LAAATLILDALKGTAAALIAA), 86-106 (AAIAAGFGAFIGHLFPVWIGF), 116-136 (LGVLIGLAWAGALVFAAAWIV), 139-159 (LLTRYSSLSALVASLVVPIAL), and 166-186 (ALAALFAIMTVIVFIKHRANI).

Belongs to the PlsY family. Probably interacts with PlsX.

Its subcellular location is the cell inner membrane. It catalyses the reaction an acyl phosphate + sn-glycerol 3-phosphate = a 1-acyl-sn-glycero-3-phosphate + phosphate. Its pathway is lipid metabolism; phospholipid metabolism. In terms of biological role, catalyzes the transfer of an acyl group from acyl-phosphate (acyl-PO(4)) to glycerol-3-phosphate (G3P) to form lysophosphatidic acid (LPA). This enzyme utilizes acyl-phosphate as fatty acyl donor, but not acyl-CoA or acyl-ACP. In Brucella suis (strain ATCC 23445 / NCTC 10510), this protein is Glycerol-3-phosphate acyltransferase.